The following is a 1138-amino-acid chain: 2'-5'-oligoadenylate synthase 3 (1138 aa).

Met1 is modified (N-acetylmethionine). The segment at 6-341 (TPAGALDKLV…GVLVQPWEGP (336 aa)) is OAS domain 1. Interaction with dsRNA stretches follow at residues 12 to 56 (DKLV…VIRI) and 185 to 199 (EPRKNFVNTRPAKLK). The tract at residues 342-462 (GLPRAGILDL…GSRMSPDLSQ (121 aa)) is linker. Basic and acidic residues predominate over residues 370 to 379 (LAVQSKERSQ). Disordered stretches follow at residues 370-403 (LAVQSKERSQKPSNSAPGFPEAATKIPAMPNPSA) and 434-459 (TQSTASSHMPPDRSSISTAGSRMSPD). Positions 447–459 (SSISTAGSRMSPD) are enriched in polar residues. 2 OAS domain regions span residues 463 to 793 (IPSK…PWDV) and 801 to 1135 (TLAE…WPVK). Residue Ser855 participates in ATP binding. Mg(2+) is bound by residues Asp867, Asp869, and Asp939. Residues Arg998, Lys1001, and Gln1020 each coordinate ATP.

It belongs to the 2-5A synthase family. Monomer. Requires Mg(2+) as cofactor. Intestine.

It is found in the cytoplasm. Its subcellular location is the nucleus. It carries out the reaction 3 ATP = 5'-triphosphoadenylyl-(2'-&gt;5')-adenylyl-(2'-&gt;5')-adenosine + 2 diphosphate. With respect to regulation, produced as a latent enzyme which is activated by dsRNA generated during the course of viral infection. Strongly activated by long dsRNAs at least 50 nucleotides in length. ssRNA does not activate the enzyme. In terms of biological role, interferon-induced, dsRNA-activated antiviral enzyme which plays a critical role in cellular innate antiviral response. In addition, it may also play a role in other cellular processes such as apoptosis, cell growth, differentiation and gene regulation. Synthesizes preferentially dimers of 2'-5'-oligoadenylates (2-5A) from ATP which then bind to the inactive monomeric form of ribonuclease L (RNase L) leading to its dimerization and subsequent activation. Activation of RNase L leads to degradation of cellular as well as viral RNA, resulting in the inhibition of protein synthesis, thus terminating viral replication. Can mediate the antiviral effect via the classical RNase L-dependent pathway or an alternative antiviral pathway independent of RNase L. The sequence is that of 2'-5'-oligoadenylate synthase 3 (Oas3) from Mus musculus (Mouse).